We begin with the raw amino-acid sequence, 248 residues long: Ubiquinone/menaquinone biosynthesis C-methyltransferase UbiE (248 aa).

Residues serine 68 and aspartate 92 each contribute to the S-adenosyl-L-methionine site.

Belongs to the class I-like SAM-binding methyltransferase superfamily. MenG/UbiE family.

The catalysed reaction is a 2-demethylmenaquinol + S-adenosyl-L-methionine = a menaquinol + S-adenosyl-L-homocysteine + H(+). It carries out the reaction a 2-methoxy-6-(all-trans-polyprenyl)benzene-1,4-diol + S-adenosyl-L-methionine = a 5-methoxy-2-methyl-3-(all-trans-polyprenyl)benzene-1,4-diol + S-adenosyl-L-homocysteine + H(+). The protein operates within quinol/quinone metabolism; menaquinone biosynthesis; menaquinol from 1,4-dihydroxy-2-naphthoate: step 2/2. Its pathway is cofactor biosynthesis; ubiquinone biosynthesis. Functionally, methyltransferase required for the conversion of demethylmenaquinol (DMKH2) to menaquinol (MKH2) and the conversion of 2-polyprenyl-6-methoxy-1,4-benzoquinol (DDMQH2) to 2-polyprenyl-3-methyl-6-methoxy-1,4-benzoquinol (DMQH2). The chain is Ubiquinone/menaquinone biosynthesis C-methyltransferase UbiE from Rickettsia massiliae (strain Mtu5).